The following is a 204-amino-acid chain: MRTFVHGGGRLPEGIDAALAHYRHQVFVGRLGWQLPMADGTFERDQYDRDDTVYVVARDEGGTICGCARLLPTTRPYLLKDVFASLLMHGMPPPESPEVWELSRFAARSGAPCPRSGRADWAVRPMLASVVQCAAQRGARRLIGATFVSMVRLFRRIGVRAHRAGPVRCIGGRPVVACWIDIDASTCAALGIPSASAAPGPVLQ.

Belongs to the autoinducer synthase family.

It carries out the reaction a fatty acyl-[ACP] + S-adenosyl-L-methionine = an N-acyl-L-homoserine lactone + S-methyl-5'-thioadenosine + holo-[ACP] + H(+). Required for the synthesis of acyl-HSL autoinducers that bind to SolR. In Ralstonia solanacearum (Pseudomonas solanacearum), this protein is Acyl-homoserine-lactone synthase (solI).